Reading from the N-terminus, the 205-residue chain is Large ribosomal subunit protein uL4 (205 aa).

Residues 56–78 (ISGTTAKPYRQKHTGRARQGSLR) are disordered.

Belongs to the universal ribosomal protein uL4 family. In terms of assembly, part of the 50S ribosomal subunit.

In terms of biological role, one of the primary rRNA binding proteins, this protein initially binds near the 5'-end of the 23S rRNA. It is important during the early stages of 50S assembly. It makes multiple contacts with different domains of the 23S rRNA in the assembled 50S subunit and ribosome. Its function is as follows. Forms part of the polypeptide exit tunnel. This is Large ribosomal subunit protein uL4 from Ehrlichia canis (strain Jake).